The following is a 1187-amino-acid chain: Myelin transcription factor 1-like protein (1187 aa).

Residues methionine 1 to glutamate 22 form a disordered region. The CCHHC-type 1 zinc-finger motif lies at glutamate 22–aspartate 65. The Zn(2+) site is built by cysteine 31, cysteine 36, histidine 49, and cysteine 55. Disordered stretches follow at residues proline 56 to cysteine 178 and arginine 221 to serine 248. Acidic residues predominate over residues glutamate 89–glutamate 172. Serine 251 bears the Phosphoserine mark. Disordered regions lie at residues serine 343 to glutamate 422 and arginine 450 to glycine 514. Positions glutamate 344–valine 358 are enriched in polar residues. 4 stretches are compositionally biased toward basic and acidic residues: residues valine 362–tyrosine 377, alanine 401–aspartate 412, arginine 450–valine 488, and aspartate 496–lysine 506. CCHHC-type zinc fingers lie at residues serine 498–isoleucine 541 and leucine 542–lysine 585. Residues cysteine 507, cysteine 512, histidine 525, cysteine 531, cysteine 551, cysteine 556, histidine 569, and cysteine 575 each contribute to the Zn(2+) site. The tract at residues alanine 686 to serine 710 is disordered. 3 CCHHC-type zinc fingers span residues leucine 897–isoleucine 940, aspartate 946–glycine 989, and lysine 999–alanine 1042. Zn(2+)-binding residues include cysteine 906, cysteine 911, histidine 924, cysteine 930, cysteine 955, cysteine 960, histidine 973, cysteine 979, cysteine 1008, cysteine 1013, histidine 1026, and cysteine 1032. Residues asparagine 1058 to serine 1132 are a coiled coil.

The protein belongs to the MYT1 family. In terms of assembly, interacts with SIN3B. As to expression, brain.

Its subcellular location is the nucleus. It localises to the chromosome. Functionally, transcription factor that plays a key role in neuronal differentiation by specifically repressing expression of non-neuronal genes during neuron differentiation. In contrast to other transcription repressors that inhibit specific lineages, mediates repression of multiple differentiation programs. Also represses expression of negative regulators of neurogenesis, such as members of the Notch signaling pathway, including HES1. The combination of three transcription factors, ASCL1, POU3F2/BRN2 and MYT1L, is sufficient to reprogram fibroblasts and other somatic cells into induced neuronal (iN) cells in vitro. Directly binds the 5'-AAGTT-3' core motif present on the promoter of target genes and represses transcription by recruiting a multiprotein complex containing SIN3B. The 5'-AAGTT-3' core motif is absent from the promoter of neural genes. The polypeptide is Myelin transcription factor 1-like protein (Mus musculus (Mouse)).